The chain runs to 454 residues: Tubulin gamma chain (454 aa).

Residue 142–148 (AGGTGSG) coordinates GTP.

It belongs to the tubulin family.

It localises to the cytoplasm. Its subcellular location is the cytoskeleton. It is found in the microtubule organizing center. The protein localises to the spindle pole body. Its function is as follows. Tubulin is the major constituent of microtubules. The gamma chain is found at microtubule organizing centers (MTOC) such as the spindle pole or the centrosome, suggesting that it is involved in the minus-end nucleation of microtubule assembly. Interacts physically with beta-tubulin and is involved in microtubule function. The protein is Tubulin gamma chain (mipA) of Emericella nidulans (strain FGSC A4 / ATCC 38163 / CBS 112.46 / NRRL 194 / M139) (Aspergillus nidulans).